Here is a 259-residue protein sequence, read N- to C-terminus: Proteasome subunit alpha (259 aa).

Residues 222–259 (RITGPALEQLIPAEPAPASEPAPESKPDTETKPADPQD) form a disordered region. Over residues 244–259 (PESKPDTETKPADPQD) the composition is skewed to basic and acidic residues.

This sequence belongs to the peptidase T1A family. The 20S proteasome core is composed of 14 alpha and 14 beta subunits that assemble into four stacked heptameric rings, resulting in a barrel-shaped structure. The two inner rings, each composed of seven catalytic beta subunits, are sandwiched by two outer rings, each composed of seven alpha subunits. The catalytic chamber with the active sites is on the inside of the barrel. Has a gated structure, the ends of the cylinder being occluded by the N-termini of the alpha-subunits. Is capped by the proteasome-associated ATPase, ARC.

The protein localises to the cytoplasm. The protein operates within protein degradation; proteasomal Pup-dependent pathway. The formation of the proteasomal ATPase ARC-20S proteasome complex, likely via the docking of the C-termini of ARC into the intersubunit pockets in the alpha-rings, may trigger opening of the gate for substrate entry. Interconversion between the open-gate and close-gate conformations leads to a dynamic regulation of the 20S proteasome proteolysis activity. In terms of biological role, component of the proteasome core, a large protease complex with broad specificity involved in protein degradation. This Rhodococcus jostii (strain RHA1) protein is Proteasome subunit alpha.